We begin with the raw amino-acid sequence, 131 residues long: Large ribosomal subunit protein bL12 (131 aa).

It belongs to the bacterial ribosomal protein bL12 family. Homodimer. Part of the ribosomal stalk of the 50S ribosomal subunit. Forms a multimeric L10(L12)X complex, where L10 forms an elongated spine to which 2 to 4 L12 dimers bind in a sequential fashion. Binds GTP-bound translation factors.

Functionally, forms part of the ribosomal stalk which helps the ribosome interact with GTP-bound translation factors. Is thus essential for accurate translation. The protein is Large ribosomal subunit protein bL12 of Parasynechococcus marenigrum (strain WH8102).